Here is a 427-residue protein sequence, read N- to C-terminus: Serine hydroxymethyltransferase (427 aa).

(6S)-5,6,7,8-tetrahydrofolate-binding positions include Leu118 and Gly122–Leu124. Position 227 is an N6-(pyridoxal phosphate)lysine (Lys227). Ser351–Phe353 is a binding site for (6S)-5,6,7,8-tetrahydrofolate.

It belongs to the SHMT family. In terms of assembly, homodimer. Requires pyridoxal 5'-phosphate as cofactor.

It is found in the cytoplasm. It catalyses the reaction (6R)-5,10-methylene-5,6,7,8-tetrahydrofolate + glycine + H2O = (6S)-5,6,7,8-tetrahydrofolate + L-serine. The protein operates within one-carbon metabolism; tetrahydrofolate interconversion. It participates in amino-acid biosynthesis; glycine biosynthesis; glycine from L-serine: step 1/1. In terms of biological role, catalyzes the reversible interconversion of serine and glycine with tetrahydrofolate (THF) serving as the one-carbon carrier. This reaction serves as the major source of one-carbon groups required for the biosynthesis of purines, thymidylate, methionine, and other important biomolecules. Also exhibits THF-independent aldolase activity toward beta-hydroxyamino acids, producing glycine and aldehydes, via a retro-aldol mechanism. The chain is Serine hydroxymethyltransferase from Thermotoga petrophila (strain ATCC BAA-488 / DSM 13995 / JCM 10881 / RKU-1).